Consider the following 357-residue polypeptide: Dual-specificity RNA methyltransferase RlmN (357 aa).

Residue E89 is the Proton acceptor of the active site. One can recognise a Radical SAM core domain in the interval 109–340 (EGEKYTVCVS…CTIRESKALD (232 aa)). A disulfide bridge connects residues C116 and C345. The [4Fe-4S] cluster site is built by C123, C127, and C130. Residues 173–174 (GE), S203, 226–228 (SLH), and N302 contribute to the S-adenosyl-L-methionine site. C345 functions as the S-methylcysteine intermediate in the catalytic mechanism.

Belongs to the radical SAM superfamily. RlmN family. Requires [4Fe-4S] cluster as cofactor.

The protein resides in the cytoplasm. It catalyses the reaction adenosine(2503) in 23S rRNA + 2 reduced [2Fe-2S]-[ferredoxin] + 2 S-adenosyl-L-methionine = 2-methyladenosine(2503) in 23S rRNA + 5'-deoxyadenosine + L-methionine + 2 oxidized [2Fe-2S]-[ferredoxin] + S-adenosyl-L-homocysteine. The catalysed reaction is adenosine(37) in tRNA + 2 reduced [2Fe-2S]-[ferredoxin] + 2 S-adenosyl-L-methionine = 2-methyladenosine(37) in tRNA + 5'-deoxyadenosine + L-methionine + 2 oxidized [2Fe-2S]-[ferredoxin] + S-adenosyl-L-homocysteine. Functionally, specifically methylates position 2 of adenine 2503 in 23S rRNA and position 2 of adenine 37 in tRNAs. m2A2503 modification seems to play a crucial role in the proofreading step occurring at the peptidyl transferase center and thus would serve to optimize ribosomal fidelity. The protein is Dual-specificity RNA methyltransferase RlmN of Helicobacter pylori (strain J99 / ATCC 700824) (Campylobacter pylori J99).